Reading from the N-terminus, the 1019-residue chain is Katanin p80 WD40 repeat-containing subunit B1 homolog KTN80.1 (1019 aa).

WD repeat units lie at residues 13–53, 56–95, 98–137, 140–181, 183–221, 224–264, and 266–303; these read AHSG…SPMS, GHTS…MVRA, GHRS…CIQT, GHTR…HEFK, HEGP…LIGT, PEAT…DGVD, and GWST…LEPY. Residues 114 to 130 carry the DWD box motif; the sequence is FLASGSSDTNLRVWDTR. 4 disordered regions span residues 388-424, 455-474, 517-581, and 607-652; these read FGPA…TKSG, KSGL…LSEQ, IHRS…GSRE, and RGEK…RARS. Residues 465 to 474 are compositionally biased toward polar residues; sequence QTQNAFLSEQ. The span at 553–572 shows a compositional bias: basic and acidic residues; that stretch reads IPSKTERVLSREKPGDEQKN. Residues 614 to 628 show a composition bias toward polar residues; that stretch reads TEGASTTIEQNNNAV.

This sequence belongs to the WD repeat KATNB1 family. As to quaternary structure, component of KTN80-KTN1 complexes composed of a hexamer of KTN1-KTN80 heterodimers that sense microtubule (MT) geometry to confer precise MT severing. Interacts directly with AAA1/KTN1 and KTN80.3, and weakly with KTN80.4. As to expression, expressed at low levels in siliques, flowers, leaves, stems and roots.

The protein localises to the cytoplasm. It is found in the cytoskeleton. Its function is as follows. May participate in a complex which severs microtubules in an ATP-dependent manner. Microtubule severing may promote rapid reorganization of cellular microtubule arrays. Confers precision to microtubule (MT) severing by specific targeting of KTN1 to MT cleavage sites such as crossover or branching nucleation sites. Together with other KTN80s, regulates cell elongation by modulating MT organization. The chain is Katanin p80 WD40 repeat-containing subunit B1 homolog KTN80.1 from Arabidopsis thaliana (Mouse-ear cress).